Consider the following 966-residue polypeptide: Calsyntenin-2 (966 aa).

The N-terminal stretch at 1–20 is a signal peptide; it reads MLPGRLCLVPLLLALGVGSG. Residues 21–835 are Extracellular-facing; the sequence is GGSGDGGDSR…SIQRSSVVPS (815 aa). Cadherin domains lie at 46 to 162 and 163 to 282; these read IETS…APTF and KEPA…MPLF. Asn-58 and Asn-100 each carry an N-linked (GlcNAc...) asparagine glycan. Asn-344, Asn-376, Asn-720, and Asn-733 each carry an N-linked (GlcNAc...) asparagine glycan. Residues 836-856 form a helical membrane-spanning segment; sequence IATVVIIISVCMLVFVVAMGV. The Cytoplasmic segment spans residues 857 to 966; sequence YRVRIAHQHF…NTAGVINIWK (110 aa). The tract at residues 890–966 is disordered; the sequence is NPMEKHEGPG…NTAGVINIWK (77 aa). Over residues 901–916 the composition is skewed to acidic residues; it reads GEDETTEVEEEEEAEE. The segment covering 943–960 has biased composition (polar residues); it reads QSGTSSQSPERSTWNTAG.

It belongs to the calsyntenin family. In terms of processing, proteolytically processed under normal cellular conditions. A primary zeta-cleavage generates a large extracellular (soluble) N-terminal domain (sAlc) and a short C-terminal transmembrane fragment (CTF1). A secondary cleavage catalyzed by gamma-secretase within the transmembrane domain releases the beta-Alc-gamma chain in the extracellular milieu and produces an intracellular fragment (AlcICD). This processing is strongly suppressed in the tripartite complex formed with APBA2 and APP, which seems to prevent the association with PSEN1. In terms of tissue distribution, restricted to the brain. In the cerebral cortex, found in the somas and neuropil of all layers. Expressed at highest levels in neurons of cortical layers 5 and 6 and, at lower levels, in neurons of the upper layers. Highly expressed in Purkinje cells. Also found in a few scattered interneurons throughout the granule cell layer and occasionally in neurons in the molecular layer (at protein level). Present throughout all cortical layers, highest levels in GABAergic neurons (based on morphology and distribution pattern).

It localises to the postsynaptic cell membrane. Its subcellular location is the endoplasmic reticulum membrane. The protein resides in the golgi apparatus membrane. The protein localises to the cell projection. It is found in the dendrite. Functionally, postsynaptic adhesion molecule that binds to presynaptic neurexins to mediate synapse formation, and which is involved in learning and memory. Promotes synapse development by acting as a cell adhesion molecule at the postsynaptic membrane, which associates with neurexin-alpha at the presynaptic membrane. The polypeptide is Calsyntenin-2 (Mus musculus (Mouse)).